We begin with the raw amino-acid sequence, 491 residues long: Nicotinamide phosphoribosyltransferase (491 aa).

Met1 is subject to N-acetylmethionine. Tyr188 is modified (phosphotyrosine). A diphosphate-binding site is contributed by Arg196. Residue Asp219 participates in beta-nicotinamide D-ribonucleotide binding. Diphosphate is bound by residues His247 and Arg311. Residues 311 to 313, 353 to 354, Gly384, and Arg392 each bind beta-nicotinamide D-ribonucleotide; these read RPD and GD. At Ser472 the chain carries Phosphoserine.

It belongs to the NAPRTase family. Homodimer. As to expression, expressed in various tissues. At the highest level in liver and at the second highest in heart. The amount is higher in heart than in lung.

The protein resides in the nucleus. The protein localises to the cytoplasm. It localises to the secreted. The catalysed reaction is beta-nicotinamide D-ribonucleotide + diphosphate = 5-phospho-alpha-D-ribose 1-diphosphate + nicotinamide + H(+). It participates in cofactor biosynthesis; NAD(+) biosynthesis; nicotinamide D-ribonucleotide from 5-phospho-alpha-D-ribose 1-diphosphate and nicotinamide: step 1/1. Its function is as follows. Catalyzes the condensation of nicotinamide with 5-phosphoribosyl-1-pyrophosphate to yield nicotinamide mononucleotide, an intermediate in the biosynthesis of NAD. It is the rate limiting component in the mammalian NAD biosynthesis pathway. The secreted form behaves both as a cytokine with immunomodulating properties and an adipokine with anti-diabetic properties, it has no enzymatic activity, partly because of lack of activation by ATP, which has a low level in extracellular space and plasma. Plays a role in the modulation of circadian clock function. NAMPT-dependent oscillatory production of NAD regulates oscillation of clock target gene expression by releasing the core clock component: CLOCK-BMAL1 heterodimer from NAD-dependent SIRT1-mediated suppression. The sequence is that of Nicotinamide phosphoribosyltransferase (Nampt) from Rattus norvegicus (Rat).